Reading from the N-terminus, the 208-residue chain is Large ribosomal subunit protein uL3 (208 aa).

The residue at position 149 (Gln-149) is an N5-methylglutamine.

The protein belongs to the universal ribosomal protein uL3 family. In terms of assembly, part of the 50S ribosomal subunit. Forms a cluster with proteins L14 and L19. Post-translationally, methylated by PrmB.

Its function is as follows. One of the primary rRNA binding proteins, it binds directly near the 3'-end of the 23S rRNA, where it nucleates assembly of the 50S subunit. This chain is Large ribosomal subunit protein uL3, found in Glaesserella parasuis serovar 5 (strain SH0165) (Haemophilus parasuis).